The primary structure comprises 366 residues: Inactive PGL/p-HBAD biosynthesis glycosyltransferase Mb2982c (366 aa).

Disordered regions lie at residues 1 to 23 (MEET…PNAA) and 295 to 366 (DGDR…HGGP). Positions 295–311 (DGDRGHRWPEPPEERAG) are enriched in basic and acidic residues.

The protein belongs to the UDP-glycosyltransferase family.

This Mycobacterium bovis (strain ATCC BAA-935 / AF2122/97) protein is Inactive PGL/p-HBAD biosynthesis glycosyltransferase Mb2982c.